A 189-amino-acid chain; its full sequence is Small ribosomal subunit protein uS5 (189 aa).

One can recognise an S5 DRBM domain in the interval 22 to 85 (FVDKLVAINR…ESAKRDLIFV (64 aa)).

This sequence belongs to the universal ribosomal protein uS5 family. In terms of assembly, part of the 30S ribosomal subunit. Contacts proteins S4 and S8.

With S4 and S12 plays an important role in translational accuracy. In terms of biological role, located at the back of the 30S subunit body where it stabilizes the conformation of the head with respect to the body. This Agrobacterium fabrum (strain C58 / ATCC 33970) (Agrobacterium tumefaciens (strain C58)) protein is Small ribosomal subunit protein uS5.